A 293-amino-acid polypeptide reads, in one-letter code: Glycine N-methyltransferase (293 aa).

At valine 2 the chain carries N-acetylvaline. (6S)-5-methyl-5,6,7,8-tetrahydrofolate contacts are provided by serine 4 and tyrosine 6. Serine 10 carries the post-translational modification Phosphoserine. S-adenosyl-L-methionine is bound by residues tyrosine 22, tryptophan 31, tyrosine 34, and arginine 41. Tyrosine 34 carries the phosphotyrosine modification. Lysine 46 bears the N6-succinyllysine mark. S-adenosyl-L-methionine contacts are provided by residues alanine 65, 86–88, 117–118, leucine 137, 137–140, and arginine 176; these read DAS, NW, and LGNS. Residues lysine 191, lysine 196, and lysine 201 each carry the N6-succinyllysine modification. Histidine 215 lines the (6S)-5-methyl-5,6,7,8-tetrahydrofolate pocket. Tyrosine 221 is an S-adenosyl-L-methionine binding site. Residue arginine 240 participates in (6S)-5-methyl-5,6,7,8-tetrahydrofolate binding.

The protein belongs to the class I-like SAM-binding methyltransferase superfamily. Glycine N-methyltransferase family. As to quaternary structure, homotetramer.

It localises to the cytoplasm. The catalysed reaction is glycine + S-adenosyl-L-methionine = sarcosine + S-adenosyl-L-homocysteine + H(+). With respect to regulation, inhibited by 5-methyltetrahydrofolate monoglutamate and by 5-methyltetrahydrofolate pentaglutamate, inhibition is much more effective by the pentaglutamate form than by the monoglutamate form. Two molecules of 5-methyltetrahydrofolate are bound per tetramer. The binding sites are localized between subunits. Inhibitor binding may preclude movements of the polypeptide chain that are necessary for enzyme activity. Functionally, catalyzes the methylation of glycine by using S-adenosylmethionine (AdoMet) to form N-methylglycine (sarcosine) with the concomitant production of S-adenosylhomocysteine (AdoHcy), a reaction regulated by the binding of 5-methyltetrahydrofolate. Plays an important role in the regulation of methyl group metabolism by regulating the ratio between S-adenosyl-L-methionine and S-adenosyl-L-homocysteine. The chain is Glycine N-methyltransferase (Gnmt) from Mus musculus (Mouse).